A 132-amino-acid chain; its full sequence is UPF0299 membrane protein YohJ (132 aa).

4 helical membrane-spanning segments follow: residues 5–25, 26–46, 63–83, and 93–113; these read LNII…LYAG, IFIA…MLIL, GCYV…VGVM, and FGPV…VVSW.

This sequence belongs to the UPF0299 family.

The protein localises to the cell inner membrane. This is UPF0299 membrane protein YohJ from Shigella flexneri serotype 5b (strain 8401).